A 547-amino-acid chain; its full sequence is Malolactic enzyme (547 aa).

Tyrosine 92 serves as the catalytic Proton donor. The active-site Proton acceptor is lysine 165. Position 165 (lysine 165) interacts with substrate. Residues glutamate 236, aspartate 237, and aspartate 260 each coordinate Mn(2+). NAD(+)-binding positions include 293–296 (AGTA), asparagine 405, and asparagine 450. Substrate is bound at residue asparagine 450.

Belongs to the malic enzymes family. As to quaternary structure, homodimer. The cofactor is Mn(2+). It depends on NAD(+) as a cofactor.

The catalysed reaction is (S)-malate + H(+) = (S)-lactate + CO2. Its function is as follows. Involved in the malolactic fermentation (MLF) of wine, which results in a natural decrease in acidity and favorable changes in wine flavors. Catalyzes the decarboxylation of L-malate to L-lactate. The sequence is that of Malolactic enzyme from Lactiplantibacillus plantarum (strain ATCC BAA-793 / NCIMB 8826 / WCFS1) (Lactobacillus plantarum).